The primary structure comprises 168 residues: Cyanate hydratase (168 aa).

Active-site residues include arginine 91, glutamate 94, and serine 117.

Belongs to the cyanase family.

The catalysed reaction is cyanate + hydrogencarbonate + 3 H(+) = NH4(+) + 2 CO2. Functionally, catalyzes the reaction of cyanate with bicarbonate to produce ammonia and carbon dioxide. This Arabidopsis thaliana (Mouse-ear cress) protein is Cyanate hydratase.